A 277-amino-acid chain; its full sequence is Ubiquitin-conjugating enzyme suppressor 1 (277 aa).

The interval 254–277 (RTLACPDETNDNRGSEHYTKRKKI) is disordered.

Its function is as follows. Not known; its elevated expression suppresses the conditional cell cycle defects associated with UBC3/CDC34 mutations. The sequence is that of Ubiquitin-conjugating enzyme suppressor 1 (UBS1) from Saccharomyces cerevisiae (strain ATCC 204508 / S288c) (Baker's yeast).